A 560-amino-acid polypeptide reads, in one-letter code: Putative transport protein VFMJ11_0927 (560 aa).

Helical transmembrane passes span 8–28 (LLSQ…LFIA), 37–57 (LGSS…GYTF), 66–86 (FMLF…GIFL), 94–114 (LLVL…GHYF), and 161–181 (NLSV…ILLA). RCK C-terminal domains are found at residues 203 to 292 (RGIG…FRNG) and 293 to 376 (KEVF…KIGF). A run of 5 helical transmembrane segments spans residues 386 to 406 (LLAF…TMSF), 409 to 429 (VTFG…LGFL), 451 to 471 (GLLV…NEYF), 478 to 498 (VLAA…LVGA), and 539 to 559 (AGTY…MILL).

It belongs to the AAE transporter (TC 2.A.81) family. YbjL subfamily.

It is found in the cell membrane. This chain is Putative transport protein VFMJ11_0927, found in Aliivibrio fischeri (strain MJ11) (Vibrio fischeri).